Here is a 222-residue protein sequence, read N- to C-terminus: NAD(P)H-hydrate epimerase (222 aa).

Residues 9 to 209 (MQQIDSYTIE…DIGLRLPEDF (201 aa)) form the YjeF N-terminal domain. 57 to 61 (NNGAD) serves as a coordination point for (6S)-NADPHX. The K(+) site is built by N58 and D119. (6S)-NADPHX-binding positions include 123–129 (GVGLNNT) and D152. Position 155 (T155) interacts with K(+).

The protein belongs to the NnrE/AIBP family. The cofactor is K(+).

The enzyme catalyses (6R)-NADHX = (6S)-NADHX. It catalyses the reaction (6R)-NADPHX = (6S)-NADPHX. Functionally, catalyzes the epimerization of the S- and R-forms of NAD(P)HX, a damaged form of NAD(P)H that is a result of enzymatic or heat-dependent hydration. This is a prerequisite for the S-specific NAD(P)H-hydrate dehydratase to allow the repair of both epimers of NAD(P)HX. The sequence is that of NAD(P)H-hydrate epimerase from Leuconostoc citreum (strain KM20).